We begin with the raw amino-acid sequence, 1060 residues long: Probable serine/threonine-protein kinase MARK-A (1060 aa).

Basic and acidic residues-rich tracts occupy residues 1–11 (METLKEEEQFR) and 23–37 (HLKE…EREQ). 2 disordered regions span residues 1-52 (METL…LQLQ) and 67-88 (NKIP…SISV). Low complexity-rich tracts occupy residues 38–52 (QQQQ…LQLQ) and 68–88 (KIPS…SISV). One can recognise a Protein kinase domain in the interval 109–361 (YLVIKTIGRG…MEEIINHPWL (253 aa)). ATP contacts are provided by residues 115-123 (IGRGQFGKV) and Lys139. Asp232 functions as the Proton acceptor in the catalytic mechanism. Positions 409–475 (INNINNTMAT…TTTTNATTTT (67 aa)) are enriched in low complexity. Disordered regions lie at residues 409 to 488 (INNI…NNEE), 560 to 701 (GENS…SPLC), 714 to 886 (LREK…PVHS), and 899 to 966 (DDKS…QEPR). A UBA domain is found at 488–528 (ELDQEIIEELVGLGFEREELCNSIRQNKYNDAASTYFLLQG). A compositionally biased stretch (polar residues) spans 577 to 594 (TVDSPKSTNTPQYRSSNT). 4 stretches are compositionally biased toward low complexity: residues 603-613 (QQQQQQQQQQQ), 620-637 (QQQN…NNHN), 650-699 (STTV…NPSP), and 720-760 (TTTN…TSPN). Residues 761 to 770 (LQPFSLASTA) are compositionally biased toward polar residues. 2 stretches are compositionally biased toward low complexity: residues 771 to 799 (NNNN…SLNS) and 811 to 831 (QQQQ…NSSS). Basic and acidic residues predominate over residues 837 to 846 (QRQESRKLED). Low complexity-rich tracts occupy residues 904–926 (NSSS…TNNT) and 935–965 (QNSN…QQEP). A KA1 domain is found at 1008–1057 (IECETEGVRFSIEICRLPRLSVNGLKFKRIGGSSWRYKSICKDLLSQMKL).

Belongs to the protein kinase superfamily. CAMK Ser/Thr protein kinase family. SNF1 subfamily.

The catalysed reaction is L-seryl-[protein] + ATP = O-phospho-L-seryl-[protein] + ADP + H(+). It carries out the reaction L-threonyl-[protein] + ATP = O-phospho-L-threonyl-[protein] + ADP + H(+). The sequence is that of Probable serine/threonine-protein kinase MARK-A (mrkA) from Dictyostelium discoideum (Social amoeba).